Consider the following 216-residue polypeptide: Sperm microtubule inner protein 8 (216 aa).

As to quaternary structure, microtubule inner protein component of sperm flagellar doublet microtubules. As to expression, expressed in sperm.

Its subcellular location is the cytoplasm. It is found in the cytoskeleton. The protein resides in the flagellum axoneme. Its function is as follows. Microtubule inner protein (MIP) part of the dynein-decorated doublet microtubules (DMTs) in flagellum axoneme. May serve to reinforce and thus stabilize the microtubule structure in the sperm flagella. This is Sperm microtubule inner protein 8 (SPMIP8) from Bos taurus (Bovine).